Consider the following 326-residue polypeptide: UDP-3-O-acylglucosamine N-acyltransferase (326 aa).

The active-site Proton acceptor is the H225.

It belongs to the transferase hexapeptide repeat family. LpxD subfamily. As to quaternary structure, homotrimer.

It carries out the reaction a UDP-3-O-[(3R)-3-hydroxyacyl]-alpha-D-glucosamine + a (3R)-hydroxyacyl-[ACP] = a UDP-2-N,3-O-bis[(3R)-3-hydroxyacyl]-alpha-D-glucosamine + holo-[ACP] + H(+). It participates in bacterial outer membrane biogenesis; LPS lipid A biosynthesis. Catalyzes the N-acylation of UDP-3-O-acylglucosamine using 3-hydroxyacyl-ACP as the acyl donor. Is involved in the biosynthesis of lipid A, a phosphorylated glycolipid that anchors the lipopolysaccharide to the outer membrane of the cell. This is UDP-3-O-acylglucosamine N-acyltransferase from Verminephrobacter eiseniae (strain EF01-2).